A 417-amino-acid chain; its full sequence is NADH-quinone oxidoreductase subunit D (417 aa).

It belongs to the complex I 49 kDa subunit family. As to quaternary structure, NDH-1 is composed of 14 different subunits. Subunits NuoB, C, D, E, F, and G constitute the peripheral sector of the complex.

It localises to the cell inner membrane. The enzyme catalyses a quinone + NADH + 5 H(+)(in) = a quinol + NAD(+) + 4 H(+)(out). NDH-1 shuttles electrons from NADH, via FMN and iron-sulfur (Fe-S) centers, to quinones in the respiratory chain. The immediate electron acceptor for the enzyme in this species is believed to be ubiquinone. Couples the redox reaction to proton translocation (for every two electrons transferred, four hydrogen ions are translocated across the cytoplasmic membrane), and thus conserves the redox energy in a proton gradient. This is NADH-quinone oxidoreductase subunit D from Cupriavidus taiwanensis (strain DSM 17343 / BCRC 17206 / CCUG 44338 / CIP 107171 / LMG 19424 / R1) (Ralstonia taiwanensis (strain LMG 19424)).